The primary structure comprises 310 residues: Glycine-rich RNA-binding protein RZ1C (310 aa).

The RRM domain maps to 7-85; the sequence is SRIFVGGLSP…RVISVNRAEP (79 aa). Ser15 is modified (phosphoserine). The segment at 82 to 120 is disordered; that stretch reads RAEPKLGRDDGESHGSRGGRDSGYSIAGKGSFGGGGGGG. A compositionally biased stretch (basic and acidic residues) spans 83-101; sequence AEPKLGRDDGESHGSRGGR. A compositionally biased stretch (gly residues) spans 111 to 120; that stretch reads GSFGGGGGGG. The CCHC-type zinc-finger motif lies at 128-143; the sequence is CFKCGRVGHWARDCPS. The disordered stretch occupies residues 224–310; it reads RFAGGDRYSR…YPSSSTFDRY (87 aa). Basic and acidic residues-rich tracts occupy residues 226-236 and 244-253; these read AGGDRYSRGSD and DKARSFERDI. Residues 261–273 are compositionally biased toward gly residues; sequence RYGGGRAGGPIRG. Ser295 bears the Phosphoserine mark.

In terms of tissue distribution, expressed in roots, rosette and cauline leaves, stems, floral buds and flowers.

Its subcellular location is the nucleus. Its function is as follows. Binds RNA and DNA sequences non-specifically. May be involved in tolerance to cold stress. The polypeptide is Glycine-rich RNA-binding protein RZ1C (Arabidopsis thaliana (Mouse-ear cress)).